We begin with the raw amino-acid sequence, 352 residues long: Cyclin-dependent kinase-like 1 (352 aa).

A Protein kinase domain is found at 4–287; that stretch reads YEKIGKIGEG…CEQLLQHPYF (284 aa). ATP is bound by residues 10–18 and Lys-33; that span reads IGEGSYGVV. A [NKR]KIAxRE motif is present at residues 45–51; sequence KKIALRE. Asp-126 acts as the Proton acceptor in catalysis.

Belongs to the protein kinase superfamily. CMGC Ser/Thr protein kinase family. CDC2/CDKX subfamily.

The protein localises to the cytoplasm. Its subcellular location is the nucleus. It carries out the reaction L-seryl-[protein] + ATP = O-phospho-L-seryl-[protein] + ADP + H(+). It catalyses the reaction L-threonyl-[protein] + ATP = O-phospho-L-threonyl-[protein] + ADP + H(+). The chain is Cyclin-dependent kinase-like 1 from Mus musculus (Mouse).